A 596-amino-acid chain; its full sequence is Proline--tRNA ligase (596 aa).

Belongs to the class-II aminoacyl-tRNA synthetase family. ProS type 1 subfamily. As to quaternary structure, homodimer.

Its subcellular location is the cytoplasm. It catalyses the reaction tRNA(Pro) + L-proline + ATP = L-prolyl-tRNA(Pro) + AMP + diphosphate. Functionally, catalyzes the attachment of proline to tRNA(Pro) in a two-step reaction: proline is first activated by ATP to form Pro-AMP and then transferred to the acceptor end of tRNA(Pro). As ProRS can inadvertently accommodate and process non-cognate amino acids such as alanine and cysteine, to avoid such errors it has two additional distinct editing activities against alanine. One activity is designated as 'pretransfer' editing and involves the tRNA(Pro)-independent hydrolysis of activated Ala-AMP. The other activity is designated 'posttransfer' editing and involves deacylation of mischarged Ala-tRNA(Pro). The misacylated Cys-tRNA(Pro) is not edited by ProRS. This Prochlorococcus marinus (strain NATL2A) protein is Proline--tRNA ligase.